The following is a 200-amino-acid chain: 6,7-dimethyl-8-ribityllumazine synthase (200 aa).

Residues tryptophan 25, 59 to 61 (SWE), and 119 to 121 (VLI) contribute to the 5-amino-6-(D-ribitylamino)uracil site. A (2S)-2-hydroxy-3-oxobutyl phosphate-binding site is contributed by 124 to 125 (ET). Catalysis depends on histidine 127, which acts as the Proton donor. Phenylalanine 152 contacts 5-amino-6-(D-ribitylamino)uracil. Arginine 166 is a (2S)-2-hydroxy-3-oxobutyl phosphate binding site.

Belongs to the DMRL synthase family. Homopentamer.

The enzyme catalyses (2S)-2-hydroxy-3-oxobutyl phosphate + 5-amino-6-(D-ribitylamino)uracil = 6,7-dimethyl-8-(1-D-ribityl)lumazine + phosphate + 2 H2O + H(+). Its pathway is cofactor biosynthesis; riboflavin biosynthesis; riboflavin from 2-hydroxy-3-oxobutyl phosphate and 5-amino-6-(D-ribitylamino)uracil: step 1/2. In terms of biological role, catalyzes the formation of 6,7-dimethyl-8-ribityllumazine by condensation of 5-amino-6-(D-ribitylamino)uracil with 3,4-dihydroxy-2-butanone 4-phosphate. This is the penultimate step in the biosynthesis of riboflavin. The protein is 6,7-dimethyl-8-ribityllumazine synthase of Pyricularia oryzae (strain 70-15 / ATCC MYA-4617 / FGSC 8958) (Rice blast fungus).